The primary structure comprises 527 residues: N-acetylglutamate synthase, mitochondrial (527 aa).

Residues 1 to 39 (MAKVNSGSSGCRAMVMAGQFWTKPFALSSQRSGPHRRSA) constitute a mitochondrion transit peptide. The tract at residues 28-65 (SSQRSGPHRRSAAEVNRRMSSSRTAGHGSKTPLWSQQE) is disordered. A may stabilize the oligomeric structure region spans residues 40–83 (AEVNRRMSSSRTAGHGSKTPLWSQQESYNHSSLGERSAWSNRTL). The interval 40-361 (AEVNRRMSSS…SGTLFKNGDP (322 aa)) is amino-acid kinase domain (AAK). Positions 360 to 511 (DPIRRYSSLE…FAKSHPDSFC (152 aa)) constitute an N-acetyltransferase domain. Substrate-binding positions include lysine 386, lysine 429, and 459 to 464 (RSRTTN).

Belongs to the acetyltransferase family. Homodimer. Homotetramer.

The protein localises to the mitochondrion matrix. The catalysed reaction is L-glutamate + acetyl-CoA = N-acetyl-L-glutamate + CoA + H(+). Its activity is regulated as follows. Inhibited by L-arginine. Functionally, plays a role in the regulation of ureagenesis by producing the essential cofactor N-acetylglutamate (NAG), thus modulating carbamoylphosphate synthase I (cps1) activity. In Danio rerio (Zebrafish), this protein is N-acetylglutamate synthase, mitochondrial.